Here is a 491-residue protein sequence, read N- to C-terminus: Cobyric acid synthase (491 aa).

A GATase cobBQ-type domain is found at 246–432 (RKLIACPILP…VHGLLADAEL (187 aa)). C328 serves as the catalytic Nucleophile. H424 is a catalytic residue.

This sequence belongs to the CobB/CobQ family. CobQ subfamily.

Its pathway is cofactor biosynthesis; adenosylcobalamin biosynthesis. Its function is as follows. Catalyzes amidations at positions B, D, E, and G on adenosylcobyrinic A,C-diamide. NH(2) groups are provided by glutamine, and one molecule of ATP is hydrogenolyzed for each amidation. The sequence is that of Cobyric acid synthase from Novosphingobium aromaticivorans (strain ATCC 700278 / DSM 12444 / CCUG 56034 / CIP 105152 / NBRC 16084 / F199).